Consider the following 608-residue polypeptide: Albumin (608 aa).

A signal peptide spans 1–18 (MKWVTFLLLLFVSGSAFS). The propeptide occupies 19-24 (RGVFRR). Albumin domains are found at residues 19–211 (RGVF…GVKE), 212–403 (KALV…EFQP), and 404–601 (LVEE…NLVT). Histidine 27 contributes to the Cu cation binding site. Serine 29 is subject to Phosphoserine. Glutamate 30 and aspartate 37 together coordinate Ca(2+). Cysteines 77 and 86 form a disulfide. Phosphoserine is present on residues serine 82 and serine 89. Histidine 91 contributes to the Zn(2+) binding site. 6 disulfides stabilise this stretch: cysteine 99–cysteine 115, cysteine 114–cysteine 125, cysteine 148–cysteine 193, cysteine 192–cysteine 201, cysteine 224–cysteine 270, and cysteine 269–cysteine 277. N6-succinyllysine is present on lysine 229. Residue glutamate 268 coordinates Ca(2+). Positions 271 and 273 each coordinate Zn(2+). Ca(2+)-binding residues include aspartate 273, glutamate 276, and aspartate 279. 8 cysteine pairs are disulfide-bonded: cysteine 289–cysteine 303, cysteine 302–cysteine 313, cysteine 340–cysteine 385, cysteine 384–cysteine 393, cysteine 416–cysteine 462, cysteine 461–cysteine 472, cysteine 485–cysteine 501, and cysteine 500–cysteine 511. At serine 297 the chain carries Phosphoserine. Residue serine 443 is modified to Phosphoserine. 2 positions are modified to phosphothreonine: threonine 444 and threonine 446. The residue at position 460 (lysine 460) is an N6-succinyllysine. At serine 513 the chain carries Phosphoserine. 2 disulfide bridges follow: cysteine 538-cysteine 583 and cysteine 582-cysteine 591. Lysine 543 carries the post-translational modification N6-succinyllysine. N6-methyllysine is present on lysine 558. Threonine 570 bears the Phosphothreonine mark. Residue lysine 588 is modified to N6-succinyllysine.

It belongs to the ALB/AFP/VDB family. In terms of assembly, part of a complex composed of complement component C3, CLCA1/CLCA3, A2ML1/OH and ALB/serum albumin. Interacts with FCGRT; this interaction regulates ALB homeostasis. Interacts with TASOR. In plasma, occurs in a covalently-linked complex with chromophore-bound alpha-1-microglobulin; this interaction does not prevent fatty acid binding to ALB. In terms of processing, phosphorylated by FAM20C in the extracellular medium. As to expression, plasma. Expressed in the granular cells within the cerebellum.

Its subcellular location is the secreted. Functionally, binds water, Ca(2+), Na(+), K(+), fatty acids, hormones, bilirubin and drugs. Its main function is the regulation of the colloidal osmotic pressure of blood. Major zinc transporter in plasma, typically binds about 80% of all plasma zinc. Major calcium and magnesium transporter in plasma, binds approximately 45% of circulating calcium and magnesium in plasma. Potentially has more than two calcium-binding sites and might additionally bind calcium in a non-specific manner. The shared binding site between zinc and calcium at residue Asp-273 suggests a crosstalk between zinc and calcium transport in the blood. The rank order of affinity is zinc &gt; calcium &gt; magnesium. Binds to the bacterial siderophore enterobactin and inhibits enterobactin-mediated iron uptake of E.coli from ferric transferrin, and may thereby limit the utilization of iron and growth of enteric bacteria such as E.coli. Does not prevent iron uptake by the bacterial siderophore aerobactin. The chain is Albumin (Alb) from Mus musculus (Mouse).